A 417-amino-acid polypeptide reads, in one-letter code: D-inositol 3-phosphate glycosyltransferase (417 aa).

Residue His10 coordinates 1D-myo-inositol 3-phosphate. Residues Gln16–Pro17 and Gly24 each bind UDP-N-acetyl-alpha-D-glucosamine. Residues Asp21–Asn26, Lys79, Tyr112, Thr136, and Arg156 each bind 1D-myo-inositol 3-phosphate. UDP-N-acetyl-alpha-D-glucosamine contacts are provided by Arg230, Lys235, and Gln296. 3 residues coordinate Mg(2+): Tyr305, Arg306, and Ala308. UDP-N-acetyl-alpha-D-glucosamine contacts are provided by Glu318 and Glu326. Thr332 is a binding site for Mg(2+).

The protein belongs to the glycosyltransferase group 1 family. MshA subfamily. In terms of assembly, homodimer.

It carries out the reaction 1D-myo-inositol 3-phosphate + UDP-N-acetyl-alpha-D-glucosamine = 1D-myo-inositol 2-acetamido-2-deoxy-alpha-D-glucopyranoside 3-phosphate + UDP + H(+). In terms of biological role, catalyzes the transfer of a N-acetyl-glucosamine moiety to 1D-myo-inositol 3-phosphate to produce 1D-myo-inositol 2-acetamido-2-deoxy-glucopyranoside 3-phosphate in the mycothiol biosynthesis pathway. This chain is D-inositol 3-phosphate glycosyltransferase, found in Actinosynnema mirum (strain ATCC 29888 / DSM 43827 / JCM 3225 / NBRC 14064 / NCIMB 13271 / NRRL B-12336 / IMRU 3971 / 101).